The chain runs to 565 residues: MARPKNVKHIFVTGGVISSLGKGILSASLGLLLKSRGLRVAIQKYDPYINVDPGTMSPYQHGEVYVTDDGAETDLDLGHYERFLDEPTSQACNLTMGRVYKSVIDKERRGEYLGGTVQVVPHVIDEIKEKMGDLAKNGSIDVLITEIGGTIGDIESLPFLEAMRQLKLELGEHNLLNIHLTFVPYIKAASELKTKPTQHSVKMLLETGIQPDILVCRSEKPLSREIKNKVGHFCNVHDLDVIGLNDCDTIYEVPLMLLKEQLDLRVMKKLGLKKFREPNLEYWKNFCEKVKHPKDGEITIGICGKYTEYPDAYKSIIESFIHAGASNDVRVLVKMLRAEDAEDPKFDISSAFKGISGLLVAPGFGDRGIEGKVRFVQYARENNIPFFGICLGMQCATIEFARNICDLPDANSTEFNKRTRFPVIDLMEHQKKVKEKGGTMRLGSYPCILKEGSKAHELYGKFLINERHRHRYEFNNQFRKLFEEKGMIFSGTSPNGDLVEIVELKNHRWFVAVQFHPELKSRVQKVHPLFDGFVHAAKEFAQGKRQLSLEVEMPRLSSTEMENAG.

The tract at residues 1 to 272 is amidoligase domain; it reads MARPKNVKHI…DLRVMKKLGL (272 aa). Ser18 contacts CTP. Residue Ser18 coordinates UTP. 19–24 contacts ATP; sequence SLGKGI. Tyr59 contacts L-glutamine. Asp76 contacts ATP. Residues Asp76 and Glu146 each coordinate Mg(2+). Residues 153-155, 193-198, and Lys229 contribute to the CTP site; these read DIE and KTKPTQ. Residues 193–198 and Lys229 each bind UTP; that span reads KTKPTQ. Positions 299–543 constitute a Glutamine amidotransferase type-1 domain; the sequence is TIGICGKYTE…VHAAKEFAQG (245 aa). Gly363 contributes to the L-glutamine binding site. The active-site Nucleophile; for glutamine hydrolysis is the Cys390. Residues 391–394, Glu414, and Arg471 contribute to the L-glutamine site; that span reads LGMQ. Residues His516 and Glu518 contribute to the active site.

The protein belongs to the CTP synthase family. In terms of assembly, homotetramer.

It carries out the reaction UTP + L-glutamine + ATP + H2O = CTP + L-glutamate + ADP + phosphate + 2 H(+). The enzyme catalyses L-glutamine + H2O = L-glutamate + NH4(+). The catalysed reaction is UTP + NH4(+) + ATP = CTP + ADP + phosphate + 2 H(+). It participates in pyrimidine metabolism; CTP biosynthesis via de novo pathway; CTP from UDP: step 2/2. Its activity is regulated as follows. Allosterically activated by GTP, when glutamine is the substrate; GTP has no effect on the reaction when ammonia is the substrate. The allosteric effector GTP functions by stabilizing the protein conformation that binds the tetrahedral intermediate(s) formed during glutamine hydrolysis. Inhibited by the product CTP, via allosteric rather than competitive inhibition. In terms of biological role, catalyzes the ATP-dependent amination of UTP to CTP with either L-glutamine or ammonia as the source of nitrogen. Regulates intracellular CTP levels through interactions with the four ribonucleotide triphosphates. This chain is CTP synthase, found in Chlorobaculum tepidum (strain ATCC 49652 / DSM 12025 / NBRC 103806 / TLS) (Chlorobium tepidum).